Here is a 120-residue protein sequence, read N- to C-terminus: Nitrogen regulatory protein GlnK3 (120 aa).

ADP-binding positions include threonine 40 and 48–50 (GEQ). Residues threonine 40 and 48–50 (GEQ) each bind ATP. Residues 48–52 (GEQKG) and lysine 69 contribute to the 2-oxoglutarate site. ADP is bound by residues valine 75 and 98–101 (GDGR). Residues valine 75 and 98 to 101 (GDGR) each bind ATP. Residue glycine 98 participates in 2-oxoglutarate binding.

It belongs to the P(II) protein family. In terms of assembly, homotrimer. Interacts and forms a complex with Amt3.

It localises to the cytoplasm. Its activity is regulated as follows. Activity is influenced by intracellular pools of the effector molecules ATP, ADP and 2-oxoglutarate. It senses the cellular nitrogen status through 2-oxoglutarate, and the energy level of the cell by binding both ATP and ADP with different affinities. ATP and 2-oxoglutarate prohibit binding to Amt3. ADP promotes the complex formation. Its function is as follows. Involved in the regulation of nitrogen metabolism. Regulates the activity of its targets by protein-protein interaction in response to the nitrogen status of the cell. Regulates the activity of the ammonia channel Amt3 via direct interaction. The protein is Nitrogen regulatory protein GlnK3 of Archaeoglobus fulgidus (strain ATCC 49558 / DSM 4304 / JCM 9628 / NBRC 100126 / VC-16).